We begin with the raw amino-acid sequence, 400 residues long: Elongation factor Tu (400 aa).

A tr-type G domain is found at 10–208 (KPHLNVGTIG…TMDSYFPEPQ (199 aa)). Positions 19-26 (GHIDHGKT) are G1. 19 to 26 (GHIDHGKT) is a GTP binding site. Threonine 26 contacts Mg(2+). Residues 60 to 64 (GITIN) form a G2 region. Positions 81–84 (DCPG) are G3. GTP contacts are provided by residues 81-85 (DCPGH) and 136-139 (NKTD). A G4 region spans residues 136 to 139 (NKTD). A G5 region spans residues 174-176 (SAL).

This sequence belongs to the TRAFAC class translation factor GTPase superfamily. Classic translation factor GTPase family. EF-Tu/EF-1A subfamily. As to quaternary structure, monomer.

Its subcellular location is the cytoplasm. The enzyme catalyses GTP + H2O = GDP + phosphate + H(+). GTP hydrolase that promotes the GTP-dependent binding of aminoacyl-tRNA to the A-site of ribosomes during protein biosynthesis. The protein is Elongation factor Tu of Thermosipho africanus (strain TCF52B).